The primary structure comprises 185 residues: Ribosome-recycling factor (185 aa).

The tract at residues 138 to 159 (KVKKLEKDKEISEDESKKAQEQ) is disordered.

This sequence belongs to the RRF family.

The protein localises to the cytoplasm. Functionally, responsible for the release of ribosomes from messenger RNA at the termination of protein biosynthesis. May increase the efficiency of translation by recycling ribosomes from one round of translation to another. This chain is Ribosome-recycling factor, found in Helicobacter acinonychis (strain Sheeba).